The chain runs to 356 residues: Alanine racemase (356 aa).

Lysine 34 acts as the Proton acceptor; specific for D-alanine in catalysis. Position 34 is an N6-(pyridoxal phosphate)lysine (lysine 34). Arginine 129 lines the substrate pocket. Catalysis depends on tyrosine 253, which acts as the Proton acceptor; specific for L-alanine. Methionine 301 contacts substrate.

This sequence belongs to the alanine racemase family. Pyridoxal 5'-phosphate is required as a cofactor.

It catalyses the reaction L-alanine = D-alanine. It participates in amino-acid biosynthesis; D-alanine biosynthesis; D-alanine from L-alanine: step 1/1. Functionally, catalyzes the interconversion of L-alanine and D-alanine. May also act on other amino acids. The protein is Alanine racemase (alr) of Nitrosococcus oceani (strain ATCC 19707 / BCRC 17464 / JCM 30415 / NCIMB 11848 / C-107).